The chain runs to 487 residues: Glutamyl-tRNA(Gln) amidotransferase subunit A (487 aa).

Catalysis depends on charge relay system residues K74 and S149. S173 serves as the catalytic Acyl-ester intermediate.

It belongs to the amidase family. GatA subfamily. In terms of assembly, heterotrimer of A, B and C subunits.

The catalysed reaction is L-glutamyl-tRNA(Gln) + L-glutamine + ATP + H2O = L-glutaminyl-tRNA(Gln) + L-glutamate + ADP + phosphate + H(+). In terms of biological role, allows the formation of correctly charged Gln-tRNA(Gln) through the transamidation of misacylated Glu-tRNA(Gln) in organisms which lack glutaminyl-tRNA synthetase. The reaction takes place in the presence of glutamine and ATP through an activated gamma-phospho-Glu-tRNA(Gln). The polypeptide is Glutamyl-tRNA(Gln) amidotransferase subunit A (Synechococcus sp. (strain WH7803)).